The primary structure comprises 98 residues: Co-chaperonin GroES (98 aa).

The protein belongs to the GroES chaperonin family. In terms of assembly, heptamer of 7 subunits arranged in a ring. Interacts with the chaperonin GroEL.

It is found in the cytoplasm. In terms of biological role, together with the chaperonin GroEL, plays an essential role in assisting protein folding. The GroEL-GroES system forms a nano-cage that allows encapsulation of the non-native substrate proteins and provides a physical environment optimized to promote and accelerate protein folding. GroES binds to the apical surface of the GroEL ring, thereby capping the opening of the GroEL channel. This chain is Co-chaperonin GroES, found in Bartonella tribocorum (strain CIP 105476 / IBS 506).